Reading from the N-terminus, the 254-residue chain is Photosystem II 22 kDa protein 2, chloroplastic (254 aa).

Residues 1 to 38 (MALQQSMAMPMMVVSGLGTAPRSSPMVQLQRMKKHLVV) constitute a chloroplast transit peptide. Tandem repeats lie at residues 42–148 (FKSR…FVDD) and 149–253 (ATGL…DNDD). 4 helical membrane passes run 86–106 (VAML…KGIL), 120–140 (AEPL…GALG), 184–204 (LFVG…EIIT), and 219–239 (PINE…FAAI).

This sequence belongs to the ELIP/psbS family.

Its subcellular location is the plastid. It is found in the chloroplast thylakoid membrane. Involved in high light-mediated energy-dependent nonphotochemical quenching (NPQ, qE) and thermal dissipation (TD) thus regulating energy conversion in photosystem II and protecting from photoinhibition. Also seems to regulate quantum yield of electron transport in fluctuating light conditions. This is Photosystem II 22 kDa protein 2, chloroplastic from Oryza sativa subsp. indica (Rice).